A 302-amino-acid polypeptide reads, in one-letter code: ATP synthase gamma chain (302 aa).

Belongs to the ATPase gamma chain family. As to quaternary structure, F-type ATPases have 2 components, CF(1) - the catalytic core - and CF(0) - the membrane proton channel. CF(1) has five subunits: alpha(3), beta(3), gamma(1), delta(1), epsilon(1). CF(0) has three main subunits: a, b and c.

The protein resides in the cell membrane. Functionally, produces ATP from ADP in the presence of a proton gradient across the membrane. The gamma chain is believed to be important in regulating ATPase activity and the flow of protons through the CF(0) complex. This chain is ATP synthase gamma chain, found in Leuconostoc citreum (strain KM20).